Here is a 415-residue protein sequence, read N- to C-terminus: Beta-1,4-glucuronyltransferase 1 (415 aa).

Residues 1 to 8 (MQMSYAIR) are Cytoplasmic-facing. The chain crosses the membrane as a helical; Signal-anchor for type II membrane protein span at residues 9–36 (CAFYQLLLAALMLVAMLQLLYLSLLSGL). Over 37–415 (HGQEEQDQYF…AKYPDSPRHC (379 aa)) the chain is Lumenal. Asn204 is a glycosylation site (N-linked (GlcNAc...) asparagine). Mn(2+) is bound by residues Asp227 and Asp229. The N-linked (GlcNAc...) asparagine glycan is linked to Asn300.

This sequence belongs to the glycosyltransferase 49 family. As to quaternary structure, interacts with LARGE1 and LARGE2. Mn(2+) serves as cofactor.

It localises to the golgi apparatus membrane. It catalyses the reaction 3-O-[beta-D-Xyl-(1-&gt;4)-Rib-ol-P-Rib-ol-P-3-beta-D-GalNAc-(1-&gt;3)-beta-D-GlcNAc-(1-&gt;4)-(O-6-P-alpha-D-Man)]-Thr-[protein] + UDP-alpha-D-glucuronate = 3-O-[beta-D-GlcA-(1-&gt;3)-beta-D-Xyl-(1-&gt;4)-Rib-ol-P-Rib-ol-P-3-beta-D-GalNAc-(1-&gt;3)-beta-D-GlcNAc-(1-&gt;4)-(O-6-P-alpha-D-Man)]-Thr-[protein] + UDP + H(+). The protein operates within protein modification; protein glycosylation. Beta-1,4-glucuronyltransferase involved in O-mannosylation of alpha-dystroglycan (DAG1). Transfers a glucuronic acid (GlcA) residue onto a xylose (Xyl) acceptor to produce the glucuronyl-beta-1,4-xylose-beta disaccharide primer, which is further elongated by LARGE1, during synthesis of phosphorylated O-mannosyl glycan. Phosphorylated O-mannosyl glycan is a carbohydrate structure present in alpha-dystroglycan (DAG1), which is required for binding laminin G-like domain-containing extracellular proteins with high affinity. Required for axon guidance; via its function in O-mannosylation of alpha-dystroglycan (DAG1). This is Beta-1,4-glucuronyltransferase 1 from Bos taurus (Bovine).